Here is a 346-residue protein sequence, read N- to C-terminus: Upstream stimulatory factor 2 (346 aa).

2 disordered regions span residues Met-1 to Glu-44 and Ala-215 to Glu-244. Positions Ala-11 to Ala-20 are enriched in low complexity. The segment covering Asp-226 to Glu-244 has biased composition (basic and acidic residues). One can recognise a bHLH domain in the interval Arg-235 to Leu-290. Positions Leu-307–Leu-328 are leucine-zipper.

Efficient DNA binding requires dimerization with another bHLH protein. Binds DNA as a homodimer or a heterodimer (USF1/USF2). Interacts with MAF.

Its subcellular location is the nucleus. Its function is as follows. Transcription factor that binds to a symmetrical DNA sequence (E-boxes) (5'-CACGTG-3') that is found in a variety of viral and cellular promoters. This is Upstream stimulatory factor 2 (Usf2) from Mus musculus (Mouse).